The following is a 666-amino-acid chain: Protein-arginine deiminase type-4 (666 aa).

The Ca(2+) site is built by asparagine 153, aspartate 155, aspartate 165, aspartate 168, aspartate 176, and aspartate 179. Citrulline is present on residues arginine 212 and arginine 218. Glutamine 349 provides a ligand contact to Ca(2+). Aspartate 350 is an active-site residue. Glutamate 351, glutamate 353, aspartate 369, and serine 370 together coordinate Ca(2+). A citrulline mark is found at arginine 372, arginine 374, and arginine 383. Position 374 (arginine 374) interacts with substrate. Ca(2+)-binding residues include phenylalanine 407, leucine 410, and glutamate 411. Residues histidine 471, aspartate 473, and cysteine 648 contribute to the active site.

Belongs to the protein arginine deiminase family. Requires Ca(2+) as cofactor. Autocitrullination at Arg-372 and Arg-374 inactivates the enzyme. As to expression, epidermis.

It localises to the cytoplasm. The protein localises to the nucleus. It is found in the cytoplasmic granule. The enzyme catalyses L-arginyl-[protein] + H2O = L-citrullyl-[protein] + NH4(+). Functionally, catalyzes the citrullination/deimination of arginine residues of proteins such as histones, thereby playing a key role in histone code and regulation of stem cell maintenance. Citrullinates histone H1 at 'Arg-54' (to form H1R54ci), histone H3 at 'Arg-2', 'Arg-8', 'Arg-17' and/or 'Arg-26' (to form H3R2ci, H3R8ci, H3R17ci, H3R26ci, respectively) and histone H4 at 'Arg-3' (to form H4R3ci). Acts as a key regulator of stem cell maintenance by mediating citrullination of histone H1: citrullination of 'Arg-54' of histone H1 (H1R54ci) results in H1 displacement from chromatin and global chromatin decondensation, thereby promoting pluripotency and stem cell maintenance. Promotes profound chromatin decondensation during the innate immune response to infection in neutrophils by mediating formation of H1R54ci. Required for the formation of neutrophil extracellular traps (NETs); NETs are mainly composed of DNA fibers and are released by neutrophils to bind pathogens during inflammation. Citrullination of histone H3 prevents their methylation by CARM1 and HRMT1L2/PRMT1 and represses transcription. Citrullinates EP300/P300 at 'Arg-2142', which favors its interaction with NCOA2/GRIP1. The chain is Protein-arginine deiminase type-4 (Padi4) from Rattus norvegicus (Rat).